A 563-amino-acid polypeptide reads, in one-letter code: Zinc finger CCHC domain-containing protein 7 (563 aa).

Disordered stretches follow at residues 41-64 and 133-157; these read SQNL…VPGA and SHST…QNSS. Over residues 133–142 the composition is skewed to polar residues; that stretch reads SHSTPKVSAP. A compositionally biased stretch (low complexity) spans 143-157; the sequence is QSNNFKSQKSCQNSS. 5 CCHC-type zinc fingers span residues 265 to 282, 287 to 304, 305 to 322, 328 to 345, and 372 to 389; these read VVCR…NCPV, PACC…SCPS, RYCL…ECIE, KTCH…ACPE, and VYCC…ECKE. A disordered region spans residues 443–494; that stretch reads KVDAKPPAKKRKKKHPSKKERKGTIRDYECAETKQKKKHKKRKSGLQEIEGD. Basic residues predominate over residues 449–463; that stretch reads PAKKRKKKHPSKKER. Over residues 464-476 the composition is skewed to basic and acidic residues; that stretch reads KGTIRDYECAETK. Residues 477–486 are compositionally biased toward basic residues; it reads QKKKHKKRKS.

In terms of assembly, component of a nucleolar TRAMP-like complex, an ATP-dependent exosome regulatory complex consisting of a helicase (MTREX), an oligadenylate polymerase (PAPD5 or PAPD7), and a substrate specific RNA-binding factor (ZCCHC7 or ZCCHC8). Several TRAMP-like complexes exist with specific compositions and are associated with nuclear, or nucleolar RNA exosomes.

The protein resides in the nucleus. It is found in the nucleolus. The protein is Zinc finger CCHC domain-containing protein 7 (zcchc7) of Xenopus laevis (African clawed frog).